The sequence spans 331 residues: Tagatose 1,6-diphosphate aldolase 2 (331 aa).

The protein belongs to the aldolase LacD family.

It carries out the reaction D-tagatofuranose 1,6-bisphosphate = D-glyceraldehyde 3-phosphate + dihydroxyacetone phosphate. It participates in carbohydrate metabolism; D-tagatose 6-phosphate degradation; D-glyceraldehyde 3-phosphate and glycerone phosphate from D-tagatose 6-phosphate: step 2/2. The polypeptide is Tagatose 1,6-diphosphate aldolase 2 (lacD2) (Enterococcus faecalis (strain ATCC 700802 / V583)).